Here is a 213-residue protein sequence, read N- to C-terminus: ATP phosphoribosyltransferase (213 aa).

This sequence belongs to the ATP phosphoribosyltransferase family. Short subfamily. As to quaternary structure, heteromultimer composed of HisG and HisZ subunits.

The protein resides in the cytoplasm. It carries out the reaction 1-(5-phospho-beta-D-ribosyl)-ATP + diphosphate = 5-phospho-alpha-D-ribose 1-diphosphate + ATP. It functions in the pathway amino-acid biosynthesis; L-histidine biosynthesis; L-histidine from 5-phospho-alpha-D-ribose 1-diphosphate: step 1/9. Catalyzes the condensation of ATP and 5-phosphoribose 1-diphosphate to form N'-(5'-phosphoribosyl)-ATP (PR-ATP). Has a crucial role in the pathway because the rate of histidine biosynthesis seems to be controlled primarily by regulation of HisG enzymatic activity. This is ATP phosphoribosyltransferase from Listeria welshimeri serovar 6b (strain ATCC 35897 / DSM 20650 / CCUG 15529 / CIP 8149 / NCTC 11857 / SLCC 5334 / V8).